The primary structure comprises 148 residues: Nucleoside diphosphate kinase (148 aa).

The ATP site is built by Lys-9, Phe-57, Arg-85, Thr-91, Arg-102, and Asn-112. Thr-91 is modified (phosphothreonine). The active-site Pros-phosphohistidine intermediate is His-115. Ser-122 carries the post-translational modification Phosphoserine.

The protein belongs to the NDK family. Homotetramer. Mg(2+) is required as a cofactor.

It localises to the cytoplasm. The catalysed reaction is a 2'-deoxyribonucleoside 5'-diphosphate + ATP = a 2'-deoxyribonucleoside 5'-triphosphate + ADP. The enzyme catalyses a ribonucleoside 5'-diphosphate + ATP = a ribonucleoside 5'-triphosphate + ADP. Functionally, major role in the synthesis of nucleoside triphosphates other than ATP. The ATP gamma phosphate is transferred to the NDP beta phosphate via a ping-pong mechanism, using a phosphorylated active-site intermediate. The sequence is that of Nucleoside diphosphate kinase from Bacillus anthracis.